A 143-amino-acid chain; its full sequence is Type II secretion system core protein G (143 aa).

Residues 1 to 17 constitute a propeptide, leader sequence; sequence MIKRSITRSPSRAGQAG. M18 is subject to N-methylmethionine. Residues 18–38 form a helical membrane-spanning segment; the sequence is MSLLEIIIVIVLIGAVLTLVG.

The protein belongs to the GSP G family. In terms of assembly, type II secretion system is composed of four main components: the outer membrane complex, the inner membrane complex, the cytoplasmic secretion ATPase and the periplasm-spanning pseudopilus. Forms homomultimers. Interacts with pseudopilin tip complex component XpsJ as well as XpsI and XcpH. Interacts with XpsN and secretin XpsD. Post-translationally, cleaved by the prepilin peptidase. Methylated by prepilin peptidase at the amino group of the N-terminal methionine once the leader sequence is cleaved.

Its subcellular location is the cell inner membrane. Functionally, core component of the type II secretion system required for the energy-dependent secretion of extracellular factors such as proteases and toxins from the periplasm. Pseudopilin (pilin-like) protein that polymerizes to form the pseudopilus. Further polymerization triggers pseudopilus growth. The polypeptide is Type II secretion system core protein G (xpsG) (Xanthomonas campestris pv. campestris (strain ATCC 33913 / DSM 3586 / NCPPB 528 / LMG 568 / P 25)).